Here is an 897-residue protein sequence, read N- to C-terminus: N-terminal acetyltransferase A complex auxiliary subunit NAA15 (897 aa).

7 TPR repeats span residues 77–110 (HVCW…DPDN), 111–144 (LEIL…KPNH), 189–222 (TEMI…IVDK), 223–256 (LSYK…NPDN), 298–331 (SSAV…KGVP), 380–413 (LWTL…TPTV), and 488–523 (QCMW…YADI). Disordered stretches follow at residues 578–640 (KSTA…DPHG) and 863–897 (SRKS…SVAT). A compositionally biased stretch (basic and acidic residues) spans 602 to 617 (KAEARAKKEAESKSEE). The span at 863–872 (SRKSNENGDT) shows a compositional bias: polar residues.

Part of the NatA complex. Associates with ribosomes. Interacts with NAA10. As to expression, expressed in leaves, roots, shoots and flowers.

Its function is as follows. Auxiliary subunit of the NatA N-alpha-acetyltransferase complex. Required for male gametocyte development, embryogenesis, suspensor development and the formation of the quiescent center (QC) in the root meristem. Involved in plant immunity through the regulation of SNC1 stability. Required for embryo development. The sequence is that of N-terminal acetyltransferase A complex auxiliary subunit NAA15 from Arabidopsis thaliana (Mouse-ear cress).